The sequence spans 160 residues: Transcription elongation factor GreA (160 aa).

A coiled-coil region spans residues 1 to 72 (MAEKTYPMTL…QISSLETKIR (72 aa)).

Belongs to the GreA/GreB family.

Functionally, necessary for efficient RNA polymerase transcription elongation past template-encoded arresting sites. The arresting sites in DNA have the property of trapping a certain fraction of elongating RNA polymerases that pass through, resulting in locked ternary complexes. Cleavage of the nascent transcript by cleavage factors such as GreA or GreB allows the resumption of elongation from the new 3'terminus. GreA releases sequences of 2 to 3 nucleotides. In Streptococcus sanguinis (strain SK36), this protein is Transcription elongation factor GreA.